The chain runs to 768 residues: Actin filament-associated protein 1-like 1 (768 aa).

A disordered region spans residues 83–145; that stretch reads LRDMSDDGEP…GKSPEYISSH (63 aa). Serine 87, serine 93, serine 97, serine 103, and serine 153 each carry phosphoserine. Residues 165-185 are compositionally biased toward polar residues; it reads SYPTTRMNGELKNSYNDSDAM. A disordered region spans residues 165 to 211; that stretch reads SYPTTRMNGELKNSYNDSDAMSSSYESYDEEEEEEKGRQPKHQWPSE. Residues 220-316 form the PH 1 domain; sequence DCRICAFLLR…WLKVIREVSR (97 aa). Phosphoserine occurs at positions 329 and 343. Residues 340-349 show a composition bias toward basic and acidic residues; sequence KRLSQEKQNS. The interval 340 to 382 is disordered; that stretch reads KRLSQEKQNSDSDSLGMNDSGSTLGRREACEHGKGKKNSLAEL. Residues 350–362 show a composition bias toward polar residues; sequence DSDSLGMNDSGST. One can recognise a PH 2 domain in the interval 418–512; the sequence is EVPCCGYLNV…WLGLLLVEMG (95 aa). Tyrosine 557 bears the Phosphotyrosine mark. The interval 564–609 is disordered; that stretch reads KVQDEEPQRPTGAQVKRHASSCSEKSHRADPQVKVKRHASSANQYK. A compositionally biased stretch (basic and acidic residues) spans 587-596; sequence EKSHRADPQV. Residues 611 to 701 are a coiled coil; that stretch reads GKNRAEEDAR…AVKERLQQSL (91 aa). The tract at residues 705–768 is disordered; the sequence is PALGLSVSNK…KAKEWEMKKT (64 aa). Over residues 710–734 the composition is skewed to polar residues; the sequence is SVSNKNKSQDTTNKPQSNAPEQSLP. Serine 747 carries the post-translational modification Phosphoserine. Residues 759–768 show a composition bias toward basic and acidic residues; the sequence is KAKEWEMKKT.

Interacts with CTTN.

The protein localises to the cytoplasm. It is found in the cell projection. The protein resides in the podosome. It localises to the invadopodium. Its subcellular location is the cytoskeleton. The protein localises to the stress fiber. In terms of biological role, may be involved in podosome and invadosome formation. In Mus musculus (Mouse), this protein is Actin filament-associated protein 1-like 1 (Afap1l1).